The chain runs to 364 residues: CCA-adding enzyme (364 aa).

Gly19 and Arg22 together coordinate ATP. CTP is bound by residues Gly19 and Arg22. Residues Asp32 and Asp34 each contribute to the Mg(2+) site. ATP-binding residues include Arg102, Arg148, and Arg151. Residues Arg102, Arg148, and Arg151 each contribute to the CTP site.

The protein belongs to the tRNA nucleotidyltransferase/poly(A) polymerase family. Bacterial CCA-adding enzyme type 2 subfamily. It depends on Mg(2+) as a cofactor.

It catalyses the reaction a tRNA precursor + 2 CTP + ATP = a tRNA with a 3' CCA end + 3 diphosphate. The enzyme catalyses a tRNA with a 3' CCA end + 2 CTP + ATP = a tRNA with a 3' CCACCA end + 3 diphosphate. Catalyzes the addition and repair of the essential 3'-terminal CCA sequence in tRNAs without using a nucleic acid template. Adds these three nucleotides in the order of C, C, and A to the tRNA nucleotide-73, using CTP and ATP as substrates and producing inorganic pyrophosphate. tRNA 3'-terminal CCA addition is required both for tRNA processing and repair. Also involved in tRNA surveillance by mediating tandem CCA addition to generate a CCACCA at the 3' terminus of unstable tRNAs. While stable tRNAs receive only 3'-terminal CCA, unstable tRNAs are marked with CCACCA and rapidly degraded. This chain is CCA-adding enzyme, found in Bordetella bronchiseptica (strain ATCC BAA-588 / NCTC 13252 / RB50) (Alcaligenes bronchisepticus).